We begin with the raw amino-acid sequence, 341 residues long: tRNA N6-adenosine threonylcarbamoyltransferase (341 aa).

Histidine 111 and histidine 115 together coordinate Fe cation. Substrate is bound by residues 134 to 138 (LVSGG), aspartate 167, glycine 180, and asparagine 276. Residue aspartate 304 coordinates Fe cation.

It belongs to the KAE1 / TsaD family. Fe(2+) is required as a cofactor.

It is found in the cytoplasm. The catalysed reaction is L-threonylcarbamoyladenylate + adenosine(37) in tRNA = N(6)-L-threonylcarbamoyladenosine(37) in tRNA + AMP + H(+). In terms of biological role, required for the formation of a threonylcarbamoyl group on adenosine at position 37 (t(6)A37) in tRNAs that read codons beginning with adenine. Is involved in the transfer of the threonylcarbamoyl moiety of threonylcarbamoyl-AMP (TC-AMP) to the N6 group of A37, together with TsaE and TsaB. TsaD likely plays a direct catalytic role in this reaction. The polypeptide is tRNA N6-adenosine threonylcarbamoyltransferase (Alteromonas mediterranea (strain DSM 17117 / CIP 110805 / LMG 28347 / Deep ecotype)).